The chain runs to 271 residues: Probable septum site-determining protein MinC (271 aa).

The disordered stretch occupies residues 106 to 125; sequence RRAPSPKAADDAPAQPEEPR. The span at 110–119 shows a compositional bias: low complexity; sequence SPKAADDAPA.

The protein belongs to the MinC family. As to quaternary structure, interacts with MinD and FtsZ.

In terms of biological role, cell division inhibitor that blocks the formation of polar Z ring septums. Rapidly oscillates between the poles of the cell to destabilize FtsZ filaments that have formed before they mature into polar Z rings. Prevents FtsZ polymerization. In Burkholderia thailandensis (strain ATCC 700388 / DSM 13276 / CCUG 48851 / CIP 106301 / E264), this protein is Probable septum site-determining protein MinC.